The chain runs to 523 residues: Aldehyde oxidase GLOX (523 aa).

An N-terminal signal peptide occupies residues 1–19 (MILDAAIVALADLPGTWEL).

The protein localises to the secreted. The protein resides in the cell wall. The enzyme catalyses an aldehyde + O2 + H2O = a carboxylate + H2O2 + H(+). In terms of biological role, catalyzes the oxidation of aldehydes to the corresponding carboxylate by coupling the reaction to the reduction of dioxygen to hydrogen peroxide. Substrates include glyoxal and other aldehydes. Involved in disease resistance against the grapevine powdery mildew E.necator. Is sufficient to confer disease resistance to E.necator. Can produce hydrogen peroxide in response to E.necator infection, and this may directly play a role in the defense mechanism during plant-pathogen interactions. This chain is Aldehyde oxidase GLOX, found in Vitis pseudoreticulata (Chinese wild grapevine).